Consider the following 487-residue polypeptide: Steroid 21-hydroxylase (487 aa).

Heme b contacts are provided by arginine 92 and lysine 117. Arginine 228 provides a ligand contact to 17alpha-hydroxyprogesterone. Arginine 228 lines the progesterone pocket. Positions 357, 418, and 420 each coordinate heme b.

It belongs to the cytochrome P450 family. The cofactor is heme b.

The protein localises to the endoplasmic reticulum membrane. It localises to the microsome membrane. It catalyses the reaction progesterone + reduced [NADPH--hemoprotein reductase] + O2 = 21-hydroxyprogesterone + oxidized [NADPH--hemoprotein reductase] + H2O + H(+). It carries out the reaction 17alpha-hydroxyprogesterone + reduced [NADPH--hemoprotein reductase] + O2 = 11-deoxycortisol + oxidized [NADPH--hemoprotein reductase] + H2O + H(+). Functionally, a cytochrome P450 monooxygenase that plays a major role in adrenal steroidogenesis. Catalyzes the hydroxylation at C-21 of progesterone and 17alpha-hydroxyprogesterone to respectively form 11-deoxycorticosterone and 11-deoxycortisol, intermediate metabolites in the biosynthetic pathway of mineralocorticoids and glucocorticoids. Mechanistically, uses molecular oxygen inserting one oxygen atom into a substrate, and reducing the second into a water molecule, with two electrons provided by NADPH via cytochrome P450 reductase (CPR; NADPH-ferrihemoprotein reductase). The sequence is that of Steroid 21-hydroxylase (Cyp21) from Mus musculus (Mouse).